We begin with the raw amino-acid sequence, 147 residues long: Transthyretin (147 aa).

Positions 1–20 are cleaved as a signal peptide; the sequence is MASFRLFLLCLAGLVFVSEA. C30 carries the sulfocysteine modification. K35 contacts L-thyroxine. E62 is subject to 4-carboxyglutamate. The residue at position 72 (S72) is a Phosphoserine. Residue E74 coordinates L-thyroxine. An N-linked (GlcNAc...) asparagine glycan is attached at N118. S137 contributes to the L-thyroxine binding site.

Belongs to the transthyretin family. As to quaternary structure, homotetramer. Dimer of dimers. In the homotetramer, subunits assemble around a central channel that can accommodate two ligand molecules. Interacts with RBP4. Post-translationally, sulfonation of the reactive cysteine Cys-30 enhances the stability of the native conformation of TTR, avoiding misassembly of the protein leading to amyloid formation. In terms of tissue distribution, detected in serum (at protein level).

The protein resides in the secreted. Its function is as follows. Thyroid hormone-binding protein. Probably transports thyroxine from the bloodstream to the brain. The sequence is that of Transthyretin (TTR) from Bos taurus (Bovine).